A 250-amino-acid polypeptide reads, in one-letter code: Acetylglutamate kinase (250 aa).

Residues glycine 41–glycine 42, arginine 63, and asparagine 156 each bind substrate.

Belongs to the acetylglutamate kinase family. ArgB subfamily.

The protein resides in the cytoplasm. It carries out the reaction N-acetyl-L-glutamate + ATP = N-acetyl-L-glutamyl 5-phosphate + ADP. It functions in the pathway amino-acid biosynthesis; L-arginine biosynthesis; N(2)-acetyl-L-ornithine from L-glutamate: step 2/4. Catalyzes the ATP-dependent phosphorylation of N-acetyl-L-glutamate. In Listeria welshimeri serovar 6b (strain ATCC 35897 / DSM 20650 / CCUG 15529 / CIP 8149 / NCTC 11857 / SLCC 5334 / V8), this protein is Acetylglutamate kinase.